The sequence spans 188 residues: Peptidyl-tRNA hydrolase (188 aa).

Tyrosine 14 provides a ligand contact to tRNA. The active-site Proton acceptor is the histidine 19. The tRNA site is built by tyrosine 60 and asparagine 62.

It belongs to the PTH family. In terms of assembly, monomer.

The protein localises to the cytoplasm. It carries out the reaction an N-acyl-L-alpha-aminoacyl-tRNA + H2O = an N-acyl-L-amino acid + a tRNA + H(+). Its function is as follows. Hydrolyzes ribosome-free peptidyl-tRNAs (with 1 or more amino acids incorporated), which drop off the ribosome during protein synthesis, or as a result of ribosome stalling. Catalyzes the release of premature peptidyl moieties from peptidyl-tRNA molecules trapped in stalled 50S ribosomal subunits, and thus maintains levels of free tRNAs and 50S ribosomes. The chain is Peptidyl-tRNA hydrolase from Mycoplasmopsis agalactiae (strain NCTC 10123 / CIP 59.7 / PG2) (Mycoplasma agalactiae).